A 337-amino-acid chain; its full sequence is D-lactate dehydrogenase (337 aa).

Residues 156–157 (HI), D176, 207–208 (VP), N213, 234–236 (CSR), and D260 each bind NAD(+). The active site involves R236. Residue E265 is part of the active site. Catalysis depends on H297, which acts as the Proton donor.

This sequence belongs to the D-isomer specific 2-hydroxyacid dehydrogenase family. In terms of assembly, homodimer.

The enzyme catalyses (R)-lactate + NAD(+) = pyruvate + NADH + H(+). In Lactobacillus helveticus (Lactobacillus suntoryeus), this protein is D-lactate dehydrogenase.